A 256-amino-acid chain; its full sequence is Ubiquinone/menaquinone biosynthesis C-methyltransferase UbiE (256 aa).

Over residues 1–12 (MTDPRKGDHAEP) the composition is skewed to basic and acidic residues. A disordered region spans residues 1–21 (MTDPRKGDHAEPTTHFGYQDV). Residues threonine 79, aspartate 100, and 128–129 (DA) each bind S-adenosyl-L-methionine.

Belongs to the class I-like SAM-binding methyltransferase superfamily. MenG/UbiE family.

The catalysed reaction is a 2-demethylmenaquinol + S-adenosyl-L-methionine = a menaquinol + S-adenosyl-L-homocysteine + H(+). The enzyme catalyses a 2-methoxy-6-(all-trans-polyprenyl)benzene-1,4-diol + S-adenosyl-L-methionine = a 5-methoxy-2-methyl-3-(all-trans-polyprenyl)benzene-1,4-diol + S-adenosyl-L-homocysteine + H(+). The protein operates within quinol/quinone metabolism; menaquinone biosynthesis; menaquinol from 1,4-dihydroxy-2-naphthoate: step 2/2. Its pathway is cofactor biosynthesis; ubiquinone biosynthesis. Functionally, methyltransferase required for the conversion of demethylmenaquinol (DMKH2) to menaquinol (MKH2) and the conversion of 2-polyprenyl-6-methoxy-1,4-benzoquinol (DDMQH2) to 2-polyprenyl-3-methyl-6-methoxy-1,4-benzoquinol (DMQH2). The sequence is that of Ubiquinone/menaquinone biosynthesis C-methyltransferase UbiE from Pseudomonas entomophila (strain L48).